The primary structure comprises 75 residues: Supwaprin-a (75 aa).

Positions 1 to 24 are cleaved as a signal peptide; sequence MSSGGLLLLLGFLTLWAELTPVSG. Positions 27 to 72 constitute a WAP domain; sequence RPKKPGLCPPRPQKPPCVRECKNDWSCPGEQKCCRYGCIFECRDPI. Disulfide bonds link Cys-34–Cys-60, Cys-43–Cys-64, Cys-47–Cys-59, and Cys-53–Cys-68.

It belongs to the venom waprin family. As to expression, expressed by the venom gland.

The protein localises to the secreted. Damages membranes of susceptible bacteria. Has no hemolytic activity. Not toxic to mice. Does not inhibit the proteinases elastase and cathepsin G. This chain is Supwaprin-a, found in Austrelaps superbus (Lowland copperhead snake).